Consider the following 203-residue polypeptide: Acid phosphatase (203 aa).

His13 acts as the Tele-phosphohistidine intermediate in catalysis. Residue Glu85 is the Proton donor/acceptor of the active site.

Belongs to the phosphoglycerate mutase family. As to quaternary structure, homodimer.

The enzyme catalyses a phosphate monoester + H2O = an alcohol + phosphate. The catalysed reaction is beta-D-fructose 1,6-bisphosphate + H2O = beta-D-fructose 6-phosphate + phosphate. Its pathway is carbohydrate biosynthesis; gluconeogenesis. Its activity is regulated as follows. In contrast to classical FBPases, is resistant to inhibition by lithium. Phosphatase with a broad specificity. Can dephosphorylate a variety of substrates including phosphorylated sugars like fructose-6-phosphate (F6P). Is able to function in vivo as a fructose-1,6-bisphosphatase (FBPase) and to maintain gluconeogenesis when the classical FBPase GlpX is absent. Shows negligible phosphoglycerate mutase activity. Has no phosphatase activity against 3-phosphoglycerate, 2,3-bisphosphoglycerate, or hydrophobic substrates such as alpha-napthyl phosphate. The sequence is that of Acid phosphatase from Mycobacterium tuberculosis (strain ATCC 25618 / H37Rv).